A 320-amino-acid chain; its full sequence is Malate dehydrogenase (320 aa).

Residues 10 to 15 (GAGNIG) and aspartate 34 contribute to the NAD(+) site. Substrate contacts are provided by arginine 83 and arginine 89. NAD(+)-binding positions include asparagine 96 and 119–121 (ITN). The substrate site is built by asparagine 121 and arginine 152. The Proton acceptor role is filled by histidine 176.

The protein belongs to the LDH/MDH superfamily. MDH type 3 family.

It catalyses the reaction (S)-malate + NAD(+) = oxaloacetate + NADH + H(+). In terms of biological role, catalyzes the reversible oxidation of malate to oxaloacetate. This Sphingopyxis alaskensis (strain DSM 13593 / LMG 18877 / RB2256) (Sphingomonas alaskensis) protein is Malate dehydrogenase.